Consider the following 349-residue polypeptide: Anaerobic nitrite reductase Glb1-3 (349 aa).

Globin domains lie at 13 to 162 (GFTE…AEMK) and 184 to 333 (CFTE…AEMK). Positions 56, 70, 74, 104, 108, 109, 227, 241, 245, 275, 279, and 280 each coordinate heme b.

It belongs to the plant globin family. Monomer. Heme b serves as cofactor.

Its subcellular location is the cytoplasm. It is found in the nucleus. The catalysed reaction is Fe(III)-heme b-[protein] + nitric oxide + H2O = Fe(II)-heme b-[protein] + nitrite + 2 H(+). In terms of biological role, phytoglobin that regulates the fine tuning of nitric oxide (NO) concentration in the cytosol in response to sudden changes in O(2) availability, and performs both symbiotic and nonsymbiotic functions. Exhibits NO dioxygenase activity in the presence of O(2) but nitrite reductase (NiR) activity in the absence of O(2) (e.g. during flooding or in waterlogged soil). May not function as an oxygen storage or transport protein. Extremely reactive toward the physiological ligands O(2), nitric oxide (NO), and nitrite with a very high affinity for O(2) through an hexacoordinate heme iron because of a very low dissociation constant. In Medicago truncatula (Barrel medic), this protein is Anaerobic nitrite reductase Glb1-3.